A 263-amino-acid polypeptide reads, in one-letter code: Outer membrane lipoprotein 3 (263 aa).

A signal peptide spans 1–19 (MKIMKLAGAVAIFSLFLTA). Cysteine 20 is lipidated: N-palmitoyl cysteine. Cysteine 20 carries S-diacylglycerol cysteine lipidation.

The protein belongs to the NlpA lipoprotein family.

The protein localises to the cell outer membrane. The sequence is that of Outer membrane lipoprotein 3 (plpC) from Mannheimia haemolytica (Pasteurella haemolytica).